Reading from the N-terminus, the 1203-residue chain is Plasma membrane calcium-transporting ATPase 4 (1203 aa).

The Cytoplasmic portion of the chain corresponds to 1–92; that stretch reads MTNPSGHNLP…NMIPPKKPKT (92 aa). A Phosphoserine modification is found at serine 13. Residues 93 to 113 traverse the membrane as a helical segment; sequence FLELVWEALQDVTLIILEIAA. At 114-150 the chain is on the extracellular side; sequence IISLVLSFYRPPGGENEICGHIVSNPEEDEEGETGWI. The helical transmembrane segment at 151-171 threads the bilayer; that stretch reads EGAAILASVIIVVFVTAFNDW. Over 172 to 356 the chain is Cytoplasmic; it reads SKEKQFRGLQ…KEKSVLQGKL (185 aa). The interval 294-319 is disordered; that stretch reads DDEKKKKGKKQGVSENRNKAKTQDGV. Residues serine 328 and serine 334 each carry the phosphoserine modification. The segment at 330-349 is disordered; sequence EGLDSEEKEKKASKGPKKEK. Residues 334–349 show a composition bias toward basic and acidic residues; the sequence is SEEKEKKASKGPKKEK. Residues 357–376 traverse the membrane as a helical segment; the sequence is TRLAVQIGKAGLIMSILTVL. At 377–409 the chain is on the extracellular side; sequence ILILYFVVDNFVIQRRAWLPECTPVYIQYFVKF. The helical transmembrane segment at 410–427 threads the bilayer; it reads FIIGVTVLVVAVPEGLPL. The Cytoplasmic segment spans residues 428-840; it reads AVTISLAYSV…MWGRNVYDSI (413 aa). The 4-aspartylphosphate intermediate role is filled by aspartate 465. Mg(2+) contacts are provided by aspartate 785 and aspartate 789. Residues 841–860 traverse the membrane as a helical segment; it reads SKFLQFQLTVNVVAVIVAFS. At 861–870 the chain is on the extracellular side; that stretch reads GACITQDSPL. Residues 871–891 traverse the membrane as a helical segment; it reads KAVQMLWVNLIMDTFASLALA. Residues 892 to 911 lie on the Cytoplasmic side of the membrane; it reads TEPPTDSLLRRRPYGRNKPL. Residues 912-934 form a helical membrane-spanning segment; it reads ISRTMMKNILGHAVYQLGIVFLL. Topologically, residues 935–952 are extracellular; sequence VFAGDKLFDIDSGRKAPL. The chain crosses the membrane as a helical span at residues 953-974; the sequence is NSPPSQHYTIVFNTFVLMQLFN. At 975-993 the chain is on the cytoplasmic side; the sequence is EINSRKIHGEKNVFAGVYR. Residues 994–1015 form a helical membrane-spanning segment; that stretch reads NIIFCSVVLGTFFCQILIVEVG. The Extracellular portion of the chain corresponds to 1016 to 1025; that stretch reads GKPFSCTNLT. The chain crosses the membrane as a helical span at residues 1026-1047; the sequence is MEQWMWCLFIGIGELLWGQVIS. Over 1048–1203 the chain is Cytoplasmic; that stretch reads AIPTKSLKFL…SPLQSQETPV (156 aa). Phosphoserine is present on residues serine 1064 and serine 1070. A calmodulin-binding subdomain A region spans residues 1086-1103; that stretch reads LRRGQILWVRGLNRIQTQ. A Phosphothreonine; by PKC modification is found at threonine 1102. At glutamine 1103 the chain carries Phosphoserine. A calmodulin-binding subdomain B region spans residues 1104–1113; sequence IRVVKVFHSF. Phosphoserine occurs at positions 1114, 1115, 1126, and 1144.

It belongs to the cation transport ATPase (P-type) (TC 3.A.3) family. Type IIB subfamily. Interacts with PDZD11. Interacts with SLC35G1 and STIM1. Interacts with calmodulin. Ubiquitously expressed. Not detected in liver. The highest levels are found in uterus and stomach. Isoform XA is found in uterus, brain, stomach, small intestine, colon and pancreas. Isoform XB is found in uterus, skeletal muscle, lung, kidney, spleen, stomach, small intestine and pancreas. Isoform ZA is found in testis and isoform ZB is found in testis and heart.

It localises to the cell membrane. It is found in the cell projection. The protein resides in the cilium. Its subcellular location is the flagellum membrane. It carries out the reaction Ca(2+)(in) + ATP + H2O = Ca(2+)(out) + ADP + phosphate + H(+). Its activity is regulated as follows. Activated by calcium/calmodulin. Calcium/calmodulin-regulated and magnesium-dependent enzyme that catalyzes the hydrolysis of ATP coupled with the transport of calcium out of the cell. By regulating sperm cell calcium homeostasis, may play a role in sperm motility. This is Plasma membrane calcium-transporting ATPase 4 from Rattus norvegicus (Rat).